The following is a 338-amino-acid chain: Malate dehydrogenase, mitochondrial (338 aa).

Residues Met1–Asn24 constitute a mitochondrion transit peptide. NAD(+) contacts are provided by residues Gly31–Gly37 and Asp57. O-linked (GalNAc...) serine glycosylation occurs at Ser33. Residues Lys78 and Lys91 each carry the N6-acetyllysine; alternate modification. N6-succinyllysine; alternate is present on residues Lys78 and Lys91. Residues Arg104 and Arg110 each contribute to the substrate site. NAD(+) is bound by residues Asn117 and Ile140–Asn142. Asn142 provides a ligand contact to substrate. Lys165 bears the N6-acetyllysine mark. Asp173 acts as the Proton relay in catalysis. Arg176 contributes to the substrate binding site. N6-acetyllysine; alternate is present on Lys185. Lys185 is subject to N6-succinyllysine; alternate. The active-site Proton acceptor is His200. Lys203 carries the N6-succinyllysine modification. An N6-acetyllysine; alternate mark is found at Lys215 and Lys239. N6-succinyllysine; alternate is present on residues Lys215 and Lys239. Position 239 is an N6-malonyllysine; alternate (Lys239). Position 246 is a phosphoserine (Ser246). Residue Met251 participates in NAD(+) binding. Residue Lys269 is modified to N6-succinyllysine. Residues Lys296, Lys301, Lys307, Lys314, and Lys324 each carry the N6-acetyllysine; alternate modification. N6-succinyllysine; alternate occurs at positions 296, 301, 307, 314, and 324. The residue at position 307 (Lys307) is an N6-malonyllysine; alternate. Position 326 is a phosphoserine (Ser326). Lys328, Lys329, and Lys335 each carry N6-acetyllysine; alternate. Lys328 carries the post-translational modification N6-succinyllysine; alternate. At Lys329 the chain carries N6-malonyllysine; alternate. Lys335 carries the N6-succinyllysine; alternate modification.

The protein belongs to the LDH/MDH superfamily. MDH type 1 family. In terms of assembly, homodimer. Acetylation is enhanced after treatment either with trichostin A (TSA) or with nicotinamide (NAM) with the appearance of tri- and tetraacetylations. Glucose also increases acetylation. Ubiquitously expressed. Highly expressed in skeletal muscle and heart. Also expressed in liver, ileum, colon, kidney and adipose tissue, and at very low levels in lung, pancreas, stomach and spleen.

It is found in the mitochondrion matrix. It catalyses the reaction (S)-malate + NAD(+) = oxaloacetate + NADH + H(+). Enzyme activity is enhanced by acetylation. This chain is Malate dehydrogenase, mitochondrial, found in Felis catus (Cat).